We begin with the raw amino-acid sequence, 462 residues long: Probable threonine/serine transporter YbxG (462 aa).

Helical transmembrane passes span 17–37, 38–58, 89–109, 121–141, 154–174, 190–210, 238–258, 276–296, 331–351, 355–375, 398–418, and 427–447; these read MIAL…STIS, WTGP…FFIM, ITAW…IIAV, PAWI…LISV, IKIV…FFGF, GGFF…VIAA, IIWR…TVYP, IGIT…AMSG, LYGT…NYIA, IFVY…FIIL, FAPF…VGMW, and LIVG…FGIG.

It belongs to the amino acid-polyamine-organocation (APC) superfamily.

It localises to the cell membrane. In terms of biological role, probable threonine transporter. Is also active as a minor serine permease. In Bacillus subtilis (strain 168), this protein is Probable threonine/serine transporter YbxG (ybxG).